Here is a 241-residue protein sequence, read N- to C-terminus: Endodeoxyribonuclease NucC (241 aa).

Catalysis depends on residues Asp-73, Glu-104, and Lys-106. Mg(2+) is bound by residues Asp-73 and Glu-104.

The protein belongs to the NucC endonuclease family. Self-oligomerizes. Forms homotrimers; in the presence of cAAA the trimers associate face-to-face to form homohexamers. The 2 cAAA-binding sites are on the exterior of the hexamer at the three-way junction, there are maximally 2 cyclic nucleotides per hexamer. Requires Mg(2+) as cofactor.

Its activity is regulated as follows. Activated by cAAA and to a lesser extent cAA; both cyclic nucleotides are products of its cognate CD-NTase. Cyclic nucleotide binding causes hexamerization. In terms of biological role, effector DNase of a CBASS antivirus system. CBASS (cyclic oligonucleotide-based antiphage signaling system) provides immunity against bacteriophage. The CD-NTase protein synthesizes cyclic nucleotides in response to infection; these serve as specific second messenger signals. The signals activate a diverse range of effectors, leading to bacterial cell death and thus abortive phage infection. A type III-C(AAA) CBASS system. Functionally, a cyclic nucleotide-activated dsDNase. In the presence of 3',3',3'-cyclic AMP-AMP-AMP (cAAA) and to a lesser extent cyclic-di-AMP (c-di-AMP), endonucleolytically degrades dsDNA. Binds one cAAA in a pocket on one surface of the trimer; cAAA binding promotes hexamerization which is probably necessary for nuclease activation. The nuclease digests dsDNA to about 50 bp lengths. DNA has been modeled to contact a pair of juxtaposed active sites (one from each layer of the hexamer), accounting for cleavage on both strands. This chain is Endodeoxyribonuclease NucC, found in Pseudomonas aeruginosa.